We begin with the raw amino-acid sequence, 361 residues long: Spermatogenesis-associated protein 17 (361 aa).

IQ domains lie at 32–61, 55–84, and 91–120; these read ENDA…IVTI, LNRI…VAYY, and YNAM…LKEY.

The protein resides in the cytoplasm. The polypeptide is Spermatogenesis-associated protein 17 (SPATA17) (Homo sapiens (Human)).